A 908-amino-acid chain; its full sequence is UPF0182 protein NT01CX_0852 (908 aa).

7 consecutive transmembrane segments (helical) span residues isoleucine 8–isoleucine 28, phenylalanine 47–threonine 67, isoleucine 96–tyrosine 116, leucine 157–isoleucine 177, leucine 209–tryptophan 229, phenylalanine 253–leucine 273, and isoleucine 280–alanine 300.

It belongs to the UPF0182 family.

It localises to the cell membrane. The protein is UPF0182 protein NT01CX_0852 of Clostridium novyi (strain NT).